A 292-amino-acid chain; its full sequence is Cholesterol ring-cleaving hydrolase IpdA subunit (292 aa).

It belongs to the 3-oxoacid CoA-transferase subunit A family. Heterotetramer composed of 2 IpdA subunits and 2 IpdB subunits.

It carries out the reaction (3E)-2-(2-carboxylatoethyl)-3-methyl-6-oxocyclohex-1-ene-1-carboxyl-CoA + H2O = 6-methyl-3,7-dioxodecanedioyl-CoA. It functions in the pathway steroid metabolism; cholesterol degradation. In terms of biological role, involved in the final steps of cholesterol and steroid degradation. Opens the last steroid ring of cholesterol by catalyzing the hydrolysis of (3E)-2-(2-carboxylatoethyl)-3-methyl-6-oxocyclohex-1-ene-1-carboxyl-CoA (COCHEA-CoA) to 6-methyl-3,7-dioxodecanedioyl-CoA (MeDODA-CoA). The chain is Cholesterol ring-cleaving hydrolase IpdA subunit from Mycobacterium tuberculosis (strain CDC 1551 / Oshkosh).